We begin with the raw amino-acid sequence, 359 residues long: Acyl-CoA Delta-9 desaturase (359 aa).

2 helical membrane-spanning segments follow: residues 51-71 and 74-94; these read VILF…AFTS and IATT…ITGG. Residues His96, His101, His133, His136, and His137 each coordinate Fe cation. Residues 96–101 carry the Histidine box-1 motif; the sequence is HRLWAH. A Histidine box-2 motif is present at residues 133–137; that stretch reads HRVHH. The next 2 membrane-spanning stretches (helical) occupy residues 194 to 214 and 222 to 244; these read YLIL…VYMW and WFVA…NSAA. 4 residues coordinate Fe cation: His245, His274, His277, and His278. Residues 274-278 carry the Histidine box-3 motif; sequence HNYHH.

Belongs to the fatty acid desaturase type 1 family. Fe(2+) is required as a cofactor.

Its subcellular location is the membrane. The catalysed reaction is octadecanoyl-CoA + 2 Fe(II)-[cytochrome b5] + O2 + 2 H(+) = (9Z)-octadecenoyl-CoA + 2 Fe(III)-[cytochrome b5] + 2 H2O. It carries out the reaction hexadecanoyl-CoA + 2 Fe(II)-[cytochrome b5] + O2 + 2 H(+) = (9Z)-hexadecenoyl-CoA + 2 Fe(III)-[cytochrome b5] + 2 H2O. In terms of biological role, catalyzes the formation of a Delta9 double bond, acting on saturated fatty acyl substrates like palmitoyl-CoA (hexadecanoyl-CoA) and stearoyl-CoA (octadecanoyl-CoA) with higher desaturation activity on octadecanoyl-CoA than hexadecanoyl-CoA. This chain is Acyl-CoA Delta-9 desaturase, found in Acheta domesticus (House cricket).